A 302-amino-acid chain; its full sequence is NAD kinase 2 (302 aa).

D78 acts as the Proton acceptor in catalysis. NAD(+) is bound by residues 78-79 (DG), 152-153 (NE), D182, and 193-198 (TAYSLS).

It belongs to the NAD kinase family. Requires a divalent metal cation as cofactor.

Its subcellular location is the cytoplasm. The catalysed reaction is NAD(+) + ATP = ADP + NADP(+) + H(+). In terms of biological role, involved in the regulation of the intracellular balance of NAD and NADP, and is a key enzyme in the biosynthesis of NADP. Catalyzes specifically the phosphorylation on 2'-hydroxyl of the adenosine moiety of NAD to yield NADP. The sequence is that of NAD kinase 2 from Prochlorococcus marinus (strain NATL2A).